Here is a 370-residue protein sequence, read N- to C-terminus: Type II restriction enzyme MjaII (370 aa).

It belongs to the TdeIII type II restriction endonuclease family.

The catalysed reaction is Endonucleolytic cleavage of DNA to give specific double-stranded fragments with terminal 5'-phosphates.. In terms of biological role, a P subtype restriction enzyme that recognizes the double-stranded sequence 5'-GGNCC-3'; the cleavage site is unknown. This is Type II restriction enzyme MjaII (mjaIIR) from Methanocaldococcus jannaschii (strain ATCC 43067 / DSM 2661 / JAL-1 / JCM 10045 / NBRC 100440) (Methanococcus jannaschii).